Consider the following 555-residue polypeptide: Potassium-transporting ATPase potassium-binding subunit (555 aa).

The next 10 membrane-spanning stretches (helical) occupy residues 2-22 (IWVA…PTGI), 60-80 (QYAL…YFIF), 130-150 (IGIT…VMAF), 173-193 (VFLP…VPQT), 246-266 (MSNI…PFTY), 278-298 (ILFV…TTSE), 374-394 (AGFV…GLMV), 412-432 (LIAV…ALAL), 483-503 (LVMF…AASL), and 525-545 (GIFI…MLVL).

This sequence belongs to the KdpA family. The system is composed of three essential subunits: KdpA, KdpB and KdpC.

The protein resides in the cell membrane. Its function is as follows. Part of the high-affinity ATP-driven potassium transport (or Kdp) system, which catalyzes the hydrolysis of ATP coupled with the electrogenic transport of potassium into the cytoplasm. This subunit binds the extracellular potassium ions and delivers the ions to the membrane domain of KdpB through an intramembrane tunnel. The chain is Potassium-transporting ATPase potassium-binding subunit from Bacillus mycoides (strain KBAB4) (Bacillus weihenstephanensis).